We begin with the raw amino-acid sequence, 142 residues long: ER-derived vesicles protein ERV15 (142 aa).

Topologically, residues 1 to 7 are cytoplasmic; the sequence is MSGTGLS. The helical transmembrane segment at 8 to 28 threads the bilayer; the sequence is LFVTGLILNCLNSICQIYFTI. The Extracellular portion of the chain corresponds to 29-55; it reads LYGDLEADYINSIELCKRVNRLSVPEA. The helical transmembrane segment at 56–76 threads the bilayer; sequence ILQAFISALFLFNGYWFVFLL. The Cytoplasmic segment spans residues 77-114; sequence NVPVLAYNASKVYKKTHLLDATDIFRKLGRCKIECFLK. The helical transmembrane segment at 115–135 threads the bilayer; the sequence is LGFYLLIFFFYFYRMVTALLE. Over 136-142 the chain is Extracellular; it reads NDANLIS.

The protein belongs to the cornichon family.

It localises to the membrane. In Saccharomyces cerevisiae (strain ATCC 204508 / S288c) (Baker's yeast), this protein is ER-derived vesicles protein ERV15 (ERV15).